A 307-amino-acid chain; its full sequence is Putative oxidoreductase YceM (307 aa).

The protein belongs to the Gfo/Idh/MocA family.

In Escherichia coli (strain K12), this protein is Putative oxidoreductase YceM (yceM).